A 411-amino-acid polypeptide reads, in one-letter code: LL-diaminopimelate aminotransferase (411 aa).

Residues Y15 and G42 each contribute to the substrate site. Residues Y72, 108-109, Y132, N187, Y218, and 246-248 contribute to the pyridoxal 5'-phosphate site; these read SK and SFS. K109, Y132, and N187 together coordinate substrate. Position 249 is an N6-(pyridoxal phosphate)lysine (K249). Pyridoxal 5'-phosphate contacts are provided by R257 and N292. Residues N292 and R388 each coordinate substrate.

This sequence belongs to the class-I pyridoxal-phosphate-dependent aminotransferase family. LL-diaminopimelate aminotransferase subfamily. In terms of assembly, homodimer. Pyridoxal 5'-phosphate serves as cofactor.

The enzyme catalyses (2S,6S)-2,6-diaminopimelate + 2-oxoglutarate = (S)-2,3,4,5-tetrahydrodipicolinate + L-glutamate + H2O + H(+). The protein operates within amino-acid biosynthesis; L-lysine biosynthesis via DAP pathway; LL-2,6-diaminopimelate from (S)-tetrahydrodipicolinate (aminotransferase route): step 1/1. Involved in the synthesis of meso-diaminopimelate (m-DAP or DL-DAP), required for both lysine and peptidoglycan biosynthesis. Catalyzes the direct conversion of tetrahydrodipicolinate to LL-diaminopimelate. The polypeptide is LL-diaminopimelate aminotransferase (Synechococcus sp. (strain JA-3-3Ab) (Cyanobacteria bacterium Yellowstone A-Prime)).